We begin with the raw amino-acid sequence, 469 residues long: Glutamate--tRNA ligase (469 aa).

The 'HIGH' region motif lies at 11–21 (PSPTGFIHLGN). The 'KMSKS' region signature appears at 243–247 (KMSKR). Lysine 246 contributes to the ATP binding site.

The protein belongs to the class-I aminoacyl-tRNA synthetase family. Glutamate--tRNA ligase type 1 subfamily. Monomer.

Its subcellular location is the cytoplasm. The catalysed reaction is tRNA(Glu) + L-glutamate + ATP = L-glutamyl-tRNA(Glu) + AMP + diphosphate. In terms of biological role, catalyzes the attachment of glutamate to tRNA(Glu) in a two-step reaction: glutamate is first activated by ATP to form Glu-AMP and then transferred to the acceptor end of tRNA(Glu). This Burkholderia ambifaria (strain MC40-6) protein is Glutamate--tRNA ligase.